The chain runs to 202 residues: NADH-quinone oxidoreductase subunit C (202 aa).

The protein belongs to the complex I 30 kDa subunit family. As to quaternary structure, NDH-1 is composed of 14 different subunits. Subunits NuoB, C, D, E, F, and G constitute the peripheral sector of the complex.

It is found in the cell inner membrane. The enzyme catalyses a quinone + NADH + 5 H(+)(in) = a quinol + NAD(+) + 4 H(+)(out). In terms of biological role, NDH-1 shuttles electrons from NADH, via FMN and iron-sulfur (Fe-S) centers, to quinones in the respiratory chain. The immediate electron acceptor for the enzyme in this species is believed to be ubiquinone. Couples the redox reaction to proton translocation (for every two electrons transferred, four hydrogen ions are translocated across the cytoplasmic membrane), and thus conserves the redox energy in a proton gradient. The chain is NADH-quinone oxidoreductase subunit C from Brucella canis (strain ATCC 23365 / NCTC 10854 / RM-666).